Consider the following 617-residue polypeptide: MKIPFDRWLGWPTLLLLLLGLWLLGSSLRDQRTVEAVPYSVFEQYLRDGQLTDVQVGDQVISARFTSPHDGKATVVAELVEPAMAERMSHYGVSYRRVRESNWLSQLLSWMAGPLLLLGFWYFMSRRIDGQQGGAGFLGIGRSHAKVYMEKSTGVRFDDVAGVDEAKAELQEIVDFLRDPKAHGRLGARMPKGVLLMGPTGTGKTLLARAVAGEAGVPFFSISGSEFIEMFVGVGAARVRDLFEQARAAAPAIIFIDELDALGKARGMGALVGGHDEREQTLNQLLVELDGFDPSVGVVLLAATNRPEILDPALLRAGRFDRQVLVDRPDRSGRRAILRVHAAKVRLAPDWDLDQVAAITVGFAGADLANLVNEAALVATRRRADAVTLADFTIAIERIVAGIEKKHGLLGEDEKRLVAYHELGHALTALALPSTDRVQKVSIVPHGIGALGYTLQRPSEDRHLQRRTELIDRLTVLLGGRAAEELVFGEPSTGAADDLARATGMARDMVLRFGMDEGLGPVAYADAPASPLVGLPAMPTLSERASPATAERIDAAVQALLGHARQRATEILRDNREMLDRTAAALMAQETLDEEALLALTAGLRAAGRPAAIRQVA.

The Cytoplasmic portion of the chain corresponds to 1–7 (MKIPFDR). Residues 8 to 28 (WLGWPTLLLLLLGLWLLGSSL) traverse the membrane as a helical segment. Over 29–102 (RDQRTVEAVP…VSYRRVRESN (74 aa)) the chain is Periplasmic. A helical membrane pass occupies residues 103-123 (WLSQLLSWMAGPLLLLGFWYF). At 124-617 (MSRRIDGQQG…GRPAAIRQVA (494 aa)) the chain is on the cytoplasmic side. Position 198 to 205 (198 to 205 (GPTGTGKT)) interacts with ATP. H421 lines the Zn(2+) pocket. Residue E422 is part of the active site. Zn(2+) contacts are provided by H425 and D498.

It in the central section; belongs to the AAA ATPase family. The protein in the C-terminal section; belongs to the peptidase M41 family. In terms of assembly, homohexamer. The cofactor is Zn(2+).

It is found in the cell inner membrane. Acts as a processive, ATP-dependent zinc metallopeptidase for both cytoplasmic and membrane proteins. Plays a role in the quality control of integral membrane proteins. The sequence is that of ATP-dependent zinc metalloprotease FtsH from Methylibium petroleiphilum (strain ATCC BAA-1232 / LMG 22953 / PM1).